The chain runs to 504 residues: ATP synthase subunit alpha (504 aa).

169 to 176 contributes to the ATP binding site; that stretch reads GDRKTGKT.

The protein belongs to the ATPase alpha/beta chains family. F-type ATPases have 2 components, CF(1) - the catalytic core - and CF(0) - the membrane proton channel. CF(1) has five subunits: alpha(3), beta(3), gamma(1), delta(1), epsilon(1). CF(0) has three main subunits: a(1), b(2) and c(9-12). The alpha and beta chains form an alternating ring which encloses part of the gamma chain. CF(1) is attached to CF(0) by a central stalk formed by the gamma and epsilon chains, while a peripheral stalk is formed by the delta and b chains.

The protein resides in the cell membrane. It catalyses the reaction ATP + H2O + 4 H(+)(in) = ADP + phosphate + 5 H(+)(out). In terms of biological role, produces ATP from ADP in the presence of a proton gradient across the membrane. The alpha chain is a regulatory subunit. This chain is ATP synthase subunit alpha, found in Leuconostoc citreum (strain KM20).